The following is a 485-amino-acid chain: ATP synthase subunit beta 1 (485 aa).

157–164 (GGAGVGKT) provides a ligand contact to ATP.

Belongs to the ATPase alpha/beta chains family. In terms of assembly, F-type ATPases have 2 components, CF(1) - the catalytic core - and CF(0) - the membrane proton channel. CF(1) has five subunits: alpha(3), beta(3), gamma(1), delta(1), epsilon(1). CF(0) has three main subunits: a(1), b(2) and c(9-12). The alpha and beta chains form an alternating ring which encloses part of the gamma chain. CF(1) is attached to CF(0) by a central stalk formed by the gamma and epsilon chains, while a peripheral stalk is formed by the delta and b chains.

The protein resides in the cell inner membrane. The catalysed reaction is ATP + H2O + 4 H(+)(in) = ADP + phosphate + 5 H(+)(out). In terms of biological role, produces ATP from ADP in the presence of a proton gradient across the membrane. The catalytic sites are hosted primarily by the beta subunits. The chain is ATP synthase subunit beta 1 from Psychromonas ingrahamii (strain DSM 17664 / CCUG 51855 / 37).